The primary structure comprises 488 residues: Calcium uniporter protein, mitochondrial (488 aa).

A mitochondrion-targeting transit peptide spans 1–74 (MRALVSRTPI…RSFQLSASSR (74 aa)). The tract at residues 65-117 (RSFQLSASSRDKRGPQSAEPDPLERLEVKKVQQQHENEKDDSGRDTKSGGKVA) is disordered. Topologically, residues 75–339 (DKRGPQSAEP…ECDALAHRGA (265 aa)) are mitochondrial matrix. Residues 86-112 (PLERLEVKKVQQQHENEKDDSGRDTKS) show a composition bias toward basic and acidic residues. A helical transmembrane segment spans residues 340–361 (QRVALGGFGILAFWWYIVYKLT). Over 362–370 (FETDLGWDT) the chain is Mitochondrial intermembrane. The Selectivity filter signature appears at 368–376 (WDTMEPVTY). A helical transmembrane segment spans residues 371-391 (MEPVTYLVSLSTLMGGYLWFL). Glu-372 lines the Ca(2+) pocket. The Mitochondrial matrix segment spans residues 392–488 (YHNREISYRS…ERPKDDRDDD (97 aa)). The segment at 464–488 (ALKKERRLKNGSQKEERPKDDRDDD) is disordered. Positions 475–488 (SQKEERPKDDRDDD) are enriched in basic and acidic residues.

The protein belongs to the MCU (TC 1.A.77) family. As to quaternary structure, homotetramer, assembles in a dimer or dimers configuration with two interfaces.

The protein localises to the mitochondrion inner membrane. The enzyme catalyses Ca(2+)(in) = Ca(2+)(out). Inhibited by ruthenium red or its derivative Ru360. Highly selective calcium channel localized to the inner mitochondrial membrane, which mediates calcium uptake into the mitochondrial matrix. Mitochondrial calcium homeostasis plays key roles in cellular physiology and regulates ATP production, cytoplasmic calcium signals and activation of cell death pathways. Sufficient to operate as a pore-forming channel without the need of calcium-sensor or auxiliary subunit. This chain is Calcium uniporter protein, mitochondrial, found in Neosartorya fischeri (strain ATCC 1020 / DSM 3700 / CBS 544.65 / FGSC A1164 / JCM 1740 / NRRL 181 / WB 181) (Aspergillus fischerianus).